The chain runs to 377 residues: DNA dC-&gt;dU-editing enzyme APOBEC-3G (377 aa).

The essential for cytoplasmic localization stretch occupies residues 1-60 (MNPQIRNMVEQMEPDIFVYYFNNRPILSGRNTVWLCYEVKTKDPSGPPLDANIFQGKLYP). CMP/dCMP-type deaminase domains lie at 29–138 (GRNT…LRIL) and 214–327 (GQRE…LRTL). Residue Thr-32 is modified to Phosphothreonine; by PKA. Residues His-65, Cys-97, and Cys-100 each coordinate Zn(2+). The necessary for homooligomerization stretch occupies residues 209 to 335 (KPWVSGQRET…TLHRDGAKIA (127 aa)). Residues 213–215 (SGQ) form an interaction with DNA region. Residue Thr-218 is modified to Phosphothreonine; by PKA and CAMK2. His-257 contributes to the Zn(2+) binding site. The active-site Proton donor is the Glu-259. Positions 287 and 290 each coordinate Zn(2+). Residues 312–319 (RIYDDQGR) are interaction with DNA.

The protein belongs to the cytidine and deoxycytidylate deaminase family. As to quaternary structure, homodimer. Homooligomer. Can bind RNA to form ribonucleoprotein complexes of high-molecular-mass (HMM) or low-molecular-mass (LMM). HMM is inactive and heterogeneous in protein composition because of binding nonselectively to cellular RNAs, which in turn are associated with variety of cellular proteins. The LMM form which is enzymatically active has few or no RNAs associated. Its ability to form homooligomer is distinct from its ability to assemble into HMM. Interacts with APOBEC3B, APOBEC3F, MOV10, AGO2, EIF4E, EIF4ENIF1, DCP2 and DDX6 in an RNA-dependent manner. Interacts with AGO1, AGO3 and PKA/PRKACA. The cofactor is Zn(2+).

The protein resides in the cytoplasm. It localises to the nucleus. The protein localises to the P-body. It catalyses the reaction a 2'-deoxycytidine in single-stranded DNA + H2O + H(+) = a 2'-deoxyuridine in single-stranded DNA + NH4(+). In terms of biological role, DNA deaminase (cytidine deaminase) which acts as an inhibitor of retrovirus replication and retrotransposon mobility via deaminase-dependent and -independent mechanisms. Exhibits antiviral activity against vif-deficient: HIV-1 and simian immunodeficiency viruses (SIVs) and also simian foamy virus (SFV). After the penetration of retroviral nucleocapsids into target cells of infection and the initiation of reverse transcription, it can induce the conversion of cytosine to uracil in the minus-sense single-strand viral DNA, leading to G-to-A hypermutations in the subsequent plus-strand viral DNA. The resultant detrimental levels of mutations in the proviral genome, along with a deamination-independent mechanism that works prior to the proviral integration, together exert efficient antiretroviral effects in infected target cells. Selectively targets single-stranded DNA and does not deaminate double-stranded DNA or single- or double-stranded RNA. May inhibit the mobility of LTR retrotransposons. The polypeptide is DNA dC-&gt;dU-editing enzyme APOBEC-3G (APOBEC3G) (Chlorocebus aethiops (Green monkey)).